The following is a 1023-amino-acid chain: NRPS-like oxidoreductase fscA (1023 aa).

An adenylation region spans residues 54-454 (TYGDLNGMAT…NHPFVRQCMV (401 aa)). The 84-residue stretch at 554–637 (PEDDVIGRQI…SIANHVRSAQ (84 aa)) folds into the Carrier domain. S596 carries the post-translational modification O-(pantetheine 4'-phosphoryl)serine. In terms of domain architecture, Thioester reductase (TE) spans 685 to 901 (LTGGAGYLGQ…VYDESTTRAR (217 aa)).

This sequence belongs to the NRP synthetase family. It depends on pantetheine 4'-phosphate as a cofactor.

Its pathway is secondary metabolite biosynthesis. Its function is as follows. NRPS-like oxidoreductasee; part of the fragmented gene cluster that mediates the biosynthesis of fusarochromene, a tryptophan-derived metabolite closely related to a group of mycotoxins including fusarochromanone. Within the pathway, fscA acts as an oxidoreductase that reduces the carboxyl group of 4-hydroxykyrunenine to primary alcohol. The first step of the pathway is the epimerization of L-tryptophan to D-tryptophan in the presence of the NRPS-like tryptophan epimerase fscC. D-tryptophan is subsequently hydroxylated by the tryptophan 6-hydroxylase fscE to yield 6-hydroxytryptophan. The pyrrole ring undergoes cleavaged by the tryptophan 2,3-dioxygenase fscD and is finally converted to 4-hydroxykyrunenine by the hydrolase fscH. The NRPS-like oxidoreductase fscA reduces the carboxyl group to primary alcohol and the DMATS-type prenyltransferase fscG performs prenylation, followed by the formation of a chromene ring catalyzed by the oxidoreductase fscI, which leads to desacetylfusarochromene. Epoxidation by fscF and rearrangement reactions of chromene double bonds convert compound desacetylfusarochromene to fusarochromanones. Although specific acetyltransferases were not found near the fsc gene cluster, several predicted enzymes containing the N-acetyltransferase superfamily domain are present in the genome of F.equiseti. These predicted enzymes may have the potential to convert desacetylfusarochromene to fusarochromene. This Fusarium equiseti (Fusarium scirpi) protein is NRPS-like oxidoreductase fscA.